Reading from the N-terminus, the 339-residue chain is Uroporphyrinogen decarboxylase (339 aa).

Substrate contacts are provided by residues 23 to 27, Asp-72, Tyr-147, Thr-202, and His-315; that span reads RQAGR.

This sequence belongs to the uroporphyrinogen decarboxylase family. As to quaternary structure, homodimer.

The protein localises to the cytoplasm. It carries out the reaction uroporphyrinogen III + 4 H(+) = coproporphyrinogen III + 4 CO2. It participates in porphyrin-containing compound metabolism; protoporphyrin-IX biosynthesis; coproporphyrinogen-III from 5-aminolevulinate: step 4/4. Functionally, catalyzes the decarboxylation of four acetate groups of uroporphyrinogen-III to yield coproporphyrinogen-III. This chain is Uroporphyrinogen decarboxylase, found in Geobacter sp. (strain M21).